The sequence spans 121 residues: UPF0738 protein BLi01253/BL05110 (121 aa).

The protein belongs to the UPF0738 family.

The protein is UPF0738 protein BLi01253/BL05110 of Bacillus licheniformis (strain ATCC 14580 / DSM 13 / JCM 2505 / CCUG 7422 / NBRC 12200 / NCIMB 9375 / NCTC 10341 / NRRL NRS-1264 / Gibson 46).